We begin with the raw amino-acid sequence, 881 residues long: DNA mismatch repair protein MutS (881 aa).

626–633 (GPNMAGKS) is a binding site for ATP.

The protein belongs to the DNA mismatch repair MutS family.

Functionally, this protein is involved in the repair of mismatches in DNA. It is possible that it carries out the mismatch recognition step. This protein has a weak ATPase activity. The chain is DNA mismatch repair protein MutS from Desulfosudis oleivorans (strain DSM 6200 / JCM 39069 / Hxd3) (Desulfococcus oleovorans).